Consider the following 567-residue polypeptide: MTINGWIQILVFCGIIILLVKPLGGYMTRVFGGERTLLSPVLVPVERGLYRLAGTTEREEQHWTTYAASLLLFNLAGFLLLYMLQRFQGSLPFNPMGMSDVPADLAFNTTASFVTNTNWQNYGGESTMSYLTQMAGLTVQNFVSAATGVAIAIALIRAFSRKSMKTLGNFWVDLTRCTLYVLLPLCIILTLAFVSLGVPQTIGVYAEATTLEGARQVIALGPVASQLAIKMLGTNGGGFFNANSAHPFENPDAISNMIQMVAIFAIGASLTNVFGRMVGNERQGWAIFAAMGILFVAGVAICYWAEAAGNPLIHALSVDGGNMEGKETRFGIAMSALFAVVTTAASCGAVIAMHDSMMALGGMIPMINMMLGEIIIGGVGAGFYGIVLFVVVAVFVAGLMVGRTPEYLGKKIEAKEVKMAMLAVLCLPLSILGFTAIASVIPTGLASIANPGPHGFSEILYAYTSGTANNGSAFGGLSGNTPWYNITIGLAMLMGRFLVILPAMAIAGSLVAKKAAPQSAGTFPTTGPLFVGLLIGVILVVGGLIFFPALALGPIAEHLAMIKGQMF.

The next 11 membrane-spanning stretches (helical) occupy residues 5 to 25 (GWIQILVFCGIIILLVKPLGG), 64 to 84 (TTYAASLLLFNLAGFLLLYML), 136 to 156 (GLTVQNFVSAATGVAIAIALI), 179 to 199 (LYVLLPLCIILTLAFVSLGVP), 254 to 274 (ISNMIQMVAIFAIGASLTNVF), 285 to 305 (WAIFAAMGILFVAGVAICYWA), 332 to 352 (IAMSALFAVVTTAASCGAVIA), 359 to 376 (ALGGMIPMINMMLGEIII), 421 to 441 (MLAVLCLPLSILGFTAIASVI), 486 to 506 (ITIGLAMLMGRFLVILPAMAI), and 529 to 549 (LFVGLLIGVILVVGGLIFFPA).

It belongs to the KdpA family. In terms of assembly, the system is composed of three essential subunits: KdpA, KdpB and KdpC.

The protein resides in the cell inner membrane. Its function is as follows. Part of the high-affinity ATP-driven potassium transport (or Kdp) system, which catalyzes the hydrolysis of ATP coupled with the electrogenic transport of potassium into the cytoplasm. This subunit binds the periplasmic potassium ions and delivers the ions to the membrane domain of KdpB through an intramembrane tunnel. The protein is Potassium-transporting ATPase potassium-binding subunit of Brucella anthropi (strain ATCC 49188 / DSM 6882 / CCUG 24695 / JCM 21032 / LMG 3331 / NBRC 15819 / NCTC 12168 / Alc 37) (Ochrobactrum anthropi).